A 379-amino-acid chain; its full sequence is Cobalt-precorrin-5B C(1)-methyltransferase (379 aa).

This sequence belongs to the CbiD family.

It carries out the reaction Co-precorrin-5B + S-adenosyl-L-methionine = Co-precorrin-6A + S-adenosyl-L-homocysteine. The protein operates within cofactor biosynthesis; adenosylcobalamin biosynthesis; cob(II)yrinate a,c-diamide from sirohydrochlorin (anaerobic route): step 6/10. Its function is as follows. Catalyzes the methylation of C-1 in cobalt-precorrin-5B to form cobalt-precorrin-6A. The polypeptide is Cobalt-precorrin-5B C(1)-methyltransferase (Salmonella typhi).